A 440-amino-acid chain; its full sequence is Chromosome partition protein MukF (440 aa).

The tract at residues 208 to 236 is leucine-zipper; the sequence is LSETSGTLRELQDTLDAAGDKLQANLLRI.

The protein belongs to the MukF family. In terms of assembly, interacts, and probably forms a ternary complex, with MukE and MukB via its C-terminal region. The complex formation is stimulated by calcium or magnesium. It is required for an interaction between MukE and MukB.

The protein localises to the cytoplasm. It is found in the nucleoid. Its function is as follows. Involved in chromosome condensation, segregation and cell cycle progression. May participate in facilitating chromosome segregation by condensation DNA from both sides of a centrally located replisome during cell division. Not required for mini-F plasmid partitioning. Probably acts via its interaction with MukB and MukE. Overexpression results in anucleate cells. It has a calcium binding activity. This Klebsiella pneumoniae subsp. pneumoniae (strain ATCC 700721 / MGH 78578) protein is Chromosome partition protein MukF.